The sequence spans 346 residues: Protein RecA (346 aa).

Position 68-75 (68-75) interacts with ATP; that stretch reads GPESSGKT.

It belongs to the RecA family.

It localises to the cytoplasm. In terms of biological role, can catalyze the hydrolysis of ATP in the presence of single-stranded DNA, the ATP-dependent uptake of single-stranded DNA by duplex DNA, and the ATP-dependent hybridization of homologous single-stranded DNAs. It interacts with LexA causing its activation and leading to its autocatalytic cleavage. In Heliobacterium modesticaldum (strain ATCC 51547 / Ice1), this protein is Protein RecA.